Consider the following 29-residue polypeptide: uncharacterized protein (29 aa).

It localises to the plastid. It is found in the chloroplast. This is an uncharacterized protein from Trieres chinensis (Marine centric diatom).